Reading from the N-terminus, the 469-residue chain is Protopanaxadiol 6-hydroxylase (469 aa).

The chain crosses the membrane as a helical span at residues 3 to 23; it reads LFISSQLLLLLVFCLFLFWNF. Cys416 is a heme binding site.

Belongs to the cytochrome P450 family. It depends on heme as a cofactor. In terms of tissue distribution, accumulates ubiquitously in all organs of plants, including roots, stems and leaves.

It is found in the membrane. It catalyses the reaction (20S)-protopanaxadiol + reduced [NADPH--hemoprotein reductase] + O2 = (20S)-protopanaxatriol + oxidized [NADPH--hemoprotein reductase] + H2O + H(+). The protein operates within secondary metabolite biosynthesis; terpenoid biosynthesis. Activated by N,N'-dicyclohexylcarbodiimide (DCCD) thus leading to increased ginsenosides accumulation. In terms of biological role, component of the dammarane-type triterpene saponins (e.g. PPT-type ginsenosides or panaxosides) biosynthetic pathway. Catalyzes the formation of protopanaxatriol from protopanaxadiol during ginsenoside biosynthesis, a class of tetracyclic triterpenoid saponins. The sequence is that of Protopanaxadiol 6-hydroxylase from Panax ginseng (Korean ginseng).